The sequence spans 294 residues: Ribosomal protein L11 methyltransferase (294 aa).

S-adenosyl-L-methionine-binding residues include threonine 144, glycine 165, aspartate 187, and asparagine 229.

This sequence belongs to the methyltransferase superfamily. PrmA family.

Its subcellular location is the cytoplasm. It carries out the reaction L-lysyl-[protein] + 3 S-adenosyl-L-methionine = N(6),N(6),N(6)-trimethyl-L-lysyl-[protein] + 3 S-adenosyl-L-homocysteine + 3 H(+). Methylates ribosomal protein L11. This chain is Ribosomal protein L11 methyltransferase, found in Cellvibrio japonicus (strain Ueda107) (Pseudomonas fluorescens subsp. cellulosa).